The chain runs to 763 residues: MSELLSVALFLASVLIYAWKAGRNTWWFAATLTVLGLFVILNITLYASDYFTGDGINDAVLYTLTNSLTGAGVGKYILPGIGIALALVAVFGALGWILRRRRHHPHHVGYSLLALLLALGSVDASPAFRQITELVKSQMRDGDPDFAVYYKEPAKTIPNPKLNLVYIYGESLERTYFDNDAFPNLTPELGALKNEGLDFSHTMQLPGTDYTIAGMVASQCGIPLFAPFEGNASASVSSFFPQNICLGDILKNSGYQNYFVQGANLRFAGKDVFLKSHGFDHLYGAEELKTVVADPSYRNDWGFYDDTVLDEAWKKFEALSRSGQRFSLFTLTVDTHHPDGFISRTCNRKRYDYDGKPNQSFSAVSCSQENIAEFINKIKASPWFKDTVIVVSSDHLAMNNTAWKYLNKQDRNNLFFILRGDKPQQETLAVKRNTMDNGATVLDILGGDNFIGLGRSSLSGQSLSEVFLNVKEKVLAMKPDIIRLWNFPKEIKAFTIDRDKNTIAFSGSHFRLPLLLRVSDKRVEPLPESEYSAPLRFQLADFAPRDNFVWIDRCYKMAQLWAPALALSTDWCVSQGQLGGQQTVQHVDKAQWQGKTAFKDTMIDMERYKGNVDTLKIVDNDIRYKADSFIFNVAGAPEEVKQFSGISRPESWGRWSNAQLGDEVKIEYKAPLPKKFDLVITAKAFGDNANRPIPVRVGNEEQTLVLGHDVSTITLHFNNPTDANTLVIAPPAPVSTNEGNILGHSPRKLGIGMVEIKVVNVEG.

4 helical membrane-spanning segments follow: residues 1–21 (MSELLSVALFLASVLIYAWKA), 26–46 (WWFAATLTVLGLFVILNITLY), 77–97 (ILPGIGIALALVAVFGALGWI), and 108–128 (VGYSLLALLLALGSVDASPAF).

Belongs to the OpgB family.

The protein resides in the cell inner membrane. The catalysed reaction is a phosphatidylglycerol + a membrane-derived-oligosaccharide D-glucose = a 1,2-diacyl-sn-glycerol + a membrane-derived-oligosaccharide 6-(glycerophospho)-D-glucose.. It participates in glycan metabolism; osmoregulated periplasmic glucan (OPG) biosynthesis. In terms of biological role, transfers a phosphoglycerol residue from phosphatidylglycerol to the membrane-bound nascent glucan backbones. The sequence is that of Phosphoglycerol transferase I from Salmonella newport (strain SL254).